The chain runs to 1029 residues: Kinesin-like protein KIF17 (1029 aa).

One can recognise a Kinesin motor domain in the interval 5 to 335 (AVKVVVRCRP…LRYANRAKNI (331 aa)). 91 to 98 (GQTGSGKS) lines the ATP pocket. A coiled-coil region spans residues 346 to 462 (KDALLREYQE…EENLRKETEA (117 aa)). 2 disordered regions span residues 523–569 (ELPK…MPTE) and 647–673 (VPAP…PPRP). The segment covering 532–551 (SEISLGSSESSSLEETSVSE) has biased composition (low complexity). Residues 657-673 (SDARPEAEAADDFPPRP) show a composition bias toward basic and acidic residues. Residues 739–846 (QQVLARLQLL…QLEKIDYLAT (108 aa)) are a coiled coil. Disordered stretches follow at residues 908–931 (AVST…EPNM) and 968–1029 (KSLT…SEPL).

Belongs to the TRAFAC class myosin-kinesin ATPase superfamily. Kinesin family. Homodimer. Interacts with APBA1 (via PDZ domain); the interaction is direct and is required for association of KIF17 with the cargo that is to be transported. Interacts with IFT B complex components IFT52 and IFT57. Interacts with IFT70B. Interacts with PIWIL1. Interacts with TBATA.

The protein resides in the cytoplasm. The protein localises to the cytoskeleton. It is found in the cell projection. Its subcellular location is the cilium. It localises to the dendrite. Functionally, dendrite-specific motor protein which, in association with the Apba1-containing complex (LIN-10-LIN-2-LIN-7 complex), transports vesicles containing N-methyl-D-aspartate (NMDA) receptor subunit NR2B along microtubules. The sequence is that of Kinesin-like protein KIF17 (KIF17) from Homo sapiens (Human).